The chain runs to 110 residues: Large ribosomal subunit protein uL24 (110 aa).

This sequence belongs to the universal ribosomal protein uL24 family. Part of the 50S ribosomal subunit.

Functionally, one of two assembly initiator proteins, it binds directly to the 5'-end of the 23S rRNA, where it nucleates assembly of the 50S subunit. In terms of biological role, one of the proteins that surrounds the polypeptide exit tunnel on the outside of the subunit. The polypeptide is Large ribosomal subunit protein uL24 (Roseiflexus castenholzii (strain DSM 13941 / HLO8)).